A 64-amino-acid polypeptide reads, in one-letter code: Ferredoxin-like protein in nif region (64 aa).

Residues Ala2–Asp30 enclose the 4Fe-4S ferredoxin-type domain. [4Fe-4S] cluster contacts are provided by Cys10, Cys13, Cys16, Cys20, Cys39, Cys42, Cys51, and Cys55.

[4Fe-4S] cluster is required as a cofactor.

The polypeptide is Ferredoxin-like protein in nif region (fdxN) (Rhizobium leguminosarum bv. trifolii).